A 2813-amino-acid chain; its full sequence is A-kinase anchor protein 13 (2813 aa).

2 disordered regions span residues 304–400 (AQDP…QDSC) and 415–439 (LSSC…QESL). Residues 427 to 439 (TKSSGMPTDQESL) show a composition bias toward polar residues. The important for interaction with PRKAR2A stretch occupies residues 494 to 516 (WKNVLQGGESTKERFENSNIGTA). Disordered stretches follow at residues 539–585 (AASS…VDQN), 632–653 (HQNS…SPIC), and 690–726 (SEST…RDTQ). The span at 561–577 (STEKTAETETSRSREES) shows a compositional bias: basic and acidic residues. Positions 690–702 (SESTTARQPSSQD) are enriched in polar residues. Residue serine 790 is modified to Phosphoserine. Disordered regions lie at residues 805 to 856 (VPSQ…AAEL) and 939 to 965 (ENAL…QFHE). At threonine 815 the chain carries Phosphothreonine. Positions 835–844 (PDTRPLEDRA) are enriched in basic and acidic residues. Composition is skewed to polar residues over residues 847–856 (LSTSSTAAEL) and 939–948 (ENALSSGTLQ). The residue at position 953 (threonine 953) is a Phosphothreonine. Serine 983 bears the Phosphoserine mark. Disordered stretches follow at residues 1431 to 1455 (GVLK…DSII) and 1467 to 1542 (DITG…DSIT). A compositionally biased stretch (low complexity) spans 1467–1478 (DITGSSSSTDDT). Residues 1488-1497 (GSDVSLSQIL) show a composition bias toward polar residues. Serine 1489, serine 1507, serine 1540, serine 1565, and serine 1602 each carry phosphoserine. A compositionally biased stretch (acidic residues) spans 1525 to 1540 (SEPADPGDVEEEEMDS). The tract at residues 1585–1715 (RVLGDVVRRP…HSTFHNTSAN (131 aa)) is important for interaction with MAP2K3. Residues 1601–1638 (FSLEGLTGGAGVGNKPSSSLEVSSANAEELRHPFSGEE) form a disordered region. A compositionally biased stretch (polar residues) spans 1615-1626 (KPSSSLEVSSAN). A compositionally biased stretch (basic and acidic residues) spans 1628-1638 (EELRHPFSGEE). Residues serine 1642, serine 1645, and serine 1647 each carry the phosphoserine modification. Lysine 1670 is subject to N6-methyllysine. The segment at 1755–1793 (KMSSSKKSKEKEKEKDKIKEKEKDSKDKEKDKKTVNGHT) is disordered. Positions 1758 to 1790 (SSKKSKEKEKEKDKIKEKEKDSKDKEKDKKTVN) form a coiled coil. Over residues 1761–1788 (KSKEKEKEKDKIKEKEKDSKDKEKDKKT) the composition is skewed to basic and acidic residues. The Phorbol-ester/DAG-type zinc-finger motif lies at 1791–1838 (GHTFSSIPVVGPISCSQCMKPFTNKDAYTCANCSAFVHKGCRESLASC). Phosphoserine is present on residues serine 1876, serine 1895, and serine 1929. The segment at 1919 to 2813 (MSNTWKFLSH…VSAEGEEIFC (895 aa)) is interaction with ESR1. Residue threonine 1930 is modified to Phosphothreonine. Serine 1932 and serine 1945 each carry phosphoserine. Residues 1994–2191 (KRQEVIYELM…KDVIGAVDSK (198 aa)) enclose the DH domain. The 103-residue stretch at 2231–2333 (KLVRDGSVFL…WIQIIQDTIN (103 aa)) folds into the PH domain. Serine 2345 and serine 2398 each carry phosphoserine. Positions 2345–2381 (SENEEEKKMLDTRARELKEQLHQKDQKILLLLEEKEM) form a coiled coil. Residues 2466–2502 (ETFGGFDSHQMNASKGGEKEEGDDGQDLRRTESDSGL) form a disordered region. Threonine 2467 carries the phosphothreonine modification. Position 2473 is a phosphoserine (serine 2473). Positions 2491-2502 (QDLRRTESDSGL) are enriched in basic and acidic residues. Phosphoserine occurs at positions 2563 and 2566. Residues 2568-2683 (LIEQEKQRSL…RLSQRQTERD (116 aa)) are a coiled coil. Residues 2665–2684 (QEQLRREAERLSQRQTERDL) are compositionally biased toward basic and acidic residues. A disordered region spans residues 2665–2813 (QEQLRREAER…VSAEGEEIFC (149 aa)). Phosphoserine is present on residues serine 2703, serine 2709, and serine 2728. A compositionally biased stretch (polar residues) spans 2720–2735 (SLDSELSVSPKRNSIS). Low complexity predominate over residues 2760-2771 (QSQAPASTSAST).

As to quaternary structure, interacts with the cAMP-dependent protein kinase (PKA) holoenzyme and with the regulatory subunit PRKAR2A. Interacts with RHOA. Also interacts with RHOB and RHOC. Identified in a ternary complex with RHOA and PRKAR2A. Identified in a complex with NR3C1 and RHOA. Interacts with BRAF and KSR1. Identified in a complex with BRAF and KSR1. Component of a signaling complex containing at least AKAP13, PKN1, MAPK14, ZAK and MAP2K3. Within this complex, AKAP13 interacts directly with PKN1, which in turn recruits MAPK14, MAP2K3 and ZAK. Interacts (phosphorylated form) with YWHAB and YWHAZ. Interaction with YWHAB inhibits activation of RHOA, interferes with PKN1 binding and activation of MAP kinases. Interacts with GNA12. Interacts with IKBKB. Interacts with ESR1, THRA, PPARA and NME2. Interacts (via the C-terminal domain after the PH domain) with MEF2C and RXRB. Interacts (via the C-terminal domain after the PH domain) with PRKD1. In terms of tissue distribution, detected in mammary gland. Detected in heart (at protein level). Expressed as a 5.3 kb transcript in hematopoietic cells, skeletal muscle, lung, heart, estrogen-responsive reproductive tissues, including breast ductal epithelium. Also found in testis and breast cancer cell lines. Predominantly expressed as a 10 kb transcript in the heart and at lower levels in the lung, placenta, kidney, pancreas, skeletal muscle and liver. Transcripts of between 6-9 kb are also expressed in myeloid and lymphoid lineages, a variety of epithelial tissues, and in skeletal muscle.

The protein resides in the cytoplasm. It is found in the cytosol. Its subcellular location is the cell cortex. The protein localises to the nucleus. It localises to the membrane. In terms of biological role, scaffold protein that plays an important role in assembling signaling complexes downstream of several types of G protein-coupled receptors. Activates RHOA in response to signaling via G protein-coupled receptors via its function as Rho guanine nucleotide exchange factor. May also activate other Rho family members. Part of a kinase signaling complex that links ADRA1A and ADRA1B adrenergic receptor signaling to the activation of downstream p38 MAP kinases, such as MAPK11 and MAPK14. Part of a signaling complex that links ADRA1B signaling to the activation of RHOA and IKBKB/IKKB, leading to increased NF-kappa-B transcriptional activity. Part of a RHOA-dependent signaling cascade that mediates responses to lysophosphatidic acid (LPA), a signaling molecule that activates G-protein coupled receptors and potentiates transcriptional activation of the glucocorticoid receptor NR3C1. Part of a signaling cascade that stimulates MEF2C-dependent gene expression in response to lysophosphatidic acid (LPA). Part of a signaling pathway that activates MAPK11 and/or MAPK14 and leads to increased transcription activation of the estrogen receptors ESR1 and ESR2. Part of a signaling cascade that links cAMP and EGFR signaling to BRAF signaling and to PKA-mediated phosphorylation of KSR1, leading to the activation of downstream MAP kinases, such as MAPK1 or MAPK3. Functions as a scaffold protein that anchors cAMP-dependent protein kinase (PKA) and PRKD1. This promotes activation of PRKD1, leading to increased phosphorylation of HDAC5 and ultimately cardiomyocyte hypertrophy. Has no guanine nucleotide exchange activity on CDC42, Ras or Rac. Required for normal embryonic heart development, and in particular for normal sarcomere formation in the developing cardiomyocytes. Plays a role in cardiomyocyte growth and cardiac hypertrophy in response to activation of the beta-adrenergic receptor by phenylephrine or isoproterenol. Required for normal adaptive cardiac hypertrophy in response to pressure overload. Plays a role in osteogenesis. The sequence is that of A-kinase anchor protein 13 (AKAP13) from Homo sapiens (Human).